The following is a 323-amino-acid chain: tRNA U34 carboxymethyltransferase (323 aa).

Carboxy-S-adenosyl-L-methionine contacts are provided by residues K91, W105, K110, G130, 152–154 (DPT), 181–182 (IE), M196, Y200, and R315.

The protein belongs to the class I-like SAM-binding methyltransferase superfamily. CmoB family. Homotetramer.

It catalyses the reaction carboxy-S-adenosyl-L-methionine + 5-hydroxyuridine(34) in tRNA = 5-carboxymethoxyuridine(34) in tRNA + S-adenosyl-L-homocysteine + H(+). Functionally, catalyzes carboxymethyl transfer from carboxy-S-adenosyl-L-methionine (Cx-SAM) to 5-hydroxyuridine (ho5U) to form 5-carboxymethoxyuridine (cmo5U) at position 34 in tRNAs. This chain is tRNA U34 carboxymethyltransferase, found in Escherichia coli O6:H1 (strain CFT073 / ATCC 700928 / UPEC).